Consider the following 637-residue polypeptide: Transcription factor PHYTOCHROME INTERACTING FACTOR-LIKE 15 (637 aa).

Residues 35-46 (FFGGTGGGGGGS) show a composition bias toward gly residues. Disordered stretches follow at residues 35–54 (FFGG…QERQ), 146–213 (ASLP…EGVM), and 356–397 (ECSA…RRRR). Over residues 149-170 (PASNHNGATNNRNAPVATTTTR) the composition is skewed to polar residues. The interval 384-397 (RTAEVHNLSERRRR) is basic motif. A compositionally biased stretch (basic and acidic residues) spans 384–397 (RTAEVHNLSERRRR). One can recognise a bHLH domain in the interval 384 to 433 (RTAEVHNLSERRRRDRINEKMRALQELIPNCNKIDKASMLDEAIEYLKTL). A helix-loop-helix motif region spans residues 398-433 (DRINEKMRALQELIPNCNKIDKASMLDEAIEYLKTL). Residues 601–637 (GDNENFRIPSSAQTKSSQFSDGTGKGTNARERDGAET) are disordered. The span at 608–621 (IPSSAQTKSSQFSD) shows a compositional bias: polar residues. A compositionally biased stretch (basic and acidic residues) spans 628–637 (NARERDGAET).

Belongs to the bHLH protein family. As to quaternary structure, interacts with LF and PRR1.

The protein resides in the nucleus. Functionally, transcription factor that may act as negative regulator of phyB-dependent light signal transduction. This Oryza sativa subsp. japonica (Rice) protein is Transcription factor PHYTOCHROME INTERACTING FACTOR-LIKE 15.